Consider the following 381-residue polypeptide: N-acetyldiaminopimelate deacetylase (381 aa).

D71 is a catalytic residue. The Proton acceptor role is filled by E130.

Belongs to the peptidase M20A family. N-acetyldiaminopimelate deacetylase subfamily.

It catalyses the reaction N-acetyl-(2S,6S)-2,6-diaminopimelate + H2O = (2S,6S)-2,6-diaminopimelate + acetate. The protein operates within amino-acid biosynthesis; L-lysine biosynthesis via DAP pathway; LL-2,6-diaminopimelate from (S)-tetrahydrodipicolinate (acetylase route): step 3/3. Its function is as follows. Catalyzes the conversion of N-acetyl-diaminopimelate to diaminopimelate and acetate. The chain is N-acetyldiaminopimelate deacetylase from Ligilactobacillus salivarius (strain UCC118) (Lactobacillus salivarius).